We begin with the raw amino-acid sequence, 342 residues long: UDP-N-acetylglucosamine--N-acetylmuramyl-(pentapeptide) pyrophosphoryl-undecaprenol N-acetylglucosamine transferase (342 aa).

Residues 10-12, N124, S177, and Q275 each bind UDP-N-acetyl-alpha-D-glucosamine; that span reads TGG.

This sequence belongs to the glycosyltransferase 28 family. MurG subfamily.

Its subcellular location is the cell inner membrane. It catalyses the reaction di-trans,octa-cis-undecaprenyl diphospho-N-acetyl-alpha-D-muramoyl-L-alanyl-D-glutamyl-meso-2,6-diaminopimeloyl-D-alanyl-D-alanine + UDP-N-acetyl-alpha-D-glucosamine = di-trans,octa-cis-undecaprenyl diphospho-[N-acetyl-alpha-D-glucosaminyl-(1-&gt;4)]-N-acetyl-alpha-D-muramoyl-L-alanyl-D-glutamyl-meso-2,6-diaminopimeloyl-D-alanyl-D-alanine + UDP + H(+). It participates in cell wall biogenesis; peptidoglycan biosynthesis. In terms of biological role, cell wall formation. Catalyzes the transfer of a GlcNAc subunit on undecaprenyl-pyrophosphoryl-MurNAc-pentapeptide (lipid intermediate I) to form undecaprenyl-pyrophosphoryl-MurNAc-(pentapeptide)GlcNAc (lipid intermediate II). The protein is UDP-N-acetylglucosamine--N-acetylmuramyl-(pentapeptide) pyrophosphoryl-undecaprenol N-acetylglucosamine transferase of Campylobacter jejuni (strain RM1221).